We begin with the raw amino-acid sequence, 384 residues long: F-box protein At2g07140 (384 aa).

In terms of domain architecture, F-box spans 1–46; sequence MTLPELPKDLVEEILSFVPATSLKRLRSTCKGWNRLFKDDKRFTRI.

The protein is F-box protein At2g07140 of Arabidopsis thaliana (Mouse-ear cress).